Consider the following 421-residue polypeptide: MDIFKKQESNVRSYSNNFPVVFRKAKGCWLETEQGERYLDFLAGAGSLNYGHNNPVLKQALLEYIEMDGITHGLDMHSEAKAGFLAALDNYILKPRKLDYKVQFTGPTGTNAVEAALKLAKKVKGRSSVVAFTNGFHGCTAGALAATGNQHHRQGNGSSLTNVTRIPFEGYAGVDGLALFETMLNDNSAGMDKPAAVLLETVQGEGGLNAASNEWLQRLSKICKANDILLIVDDIQAGCGRTGTFFSFEPSGIEPDIVTLSKSIGGYGLPMAVVLLKPELDQWKPGEHNGTFRGNNHAFITAAKALEIYWSNDDFETHIKQCSQNVSEVIDRCVRRFPQMFVQKKGRGMMIGIECIHGDLAAEIAKACFDDGMVIETAGPDDEVVKFFCPLTISESELNQGLSIFERAVETIAAKHFKQAS.

Lys-262 carries the post-translational modification N6-(pyridoxal phosphate)lysine.

This sequence belongs to the class-III pyridoxal-phosphate-dependent aminotransferase family. Pyridoxal 5'-phosphate serves as cofactor.

It catalyses the reaction L-2,4-diaminobutanoate + 2-oxoglutarate = L-aspartate 4-semialdehyde + L-glutamate. It functions in the pathway amine and polyamine biosynthesis; ectoine biosynthesis; L-ectoine from L-aspartate 4-semialdehyde: step 1/3. Its function is as follows. Catalyzes reversively the conversion of L-aspartate beta-semialdehyde (ASA) to L-2,4-diaminobutyrate (DABA) by transamination with L-glutamate. The chain is Diaminobutyrate--2-oxoglutarate transaminase (ectB) from Vibrio parahaemolyticus serotype O3:K6 (strain RIMD 2210633).